A 280-amino-acid chain; its full sequence is DegV domain-containing protein spyM18_1709 (280 aa).

A DegV domain is found at 3 to 280 (WKIVTDSGCD…DGGLLMGYEI (278 aa)). Residues Ser63 and Ser91 each coordinate hexadecanoate.

May bind long-chain fatty acids, such as palmitate, and may play a role in lipid transport or fatty acid metabolism. This Streptococcus pyogenes serotype M18 (strain MGAS8232) protein is DegV domain-containing protein spyM18_1709.